Here is a 269-residue protein sequence, read N- to C-terminus: Aquaporin-7 (269 aa).

Residues 1-20 (MAGSVLENIQSVLQKTWVRE) lie on the Cytoplasmic side of the membrane. Residue S4 is modified to Phosphoserine. The chain crosses the membrane as a helical span at residues 21–38 (FLAEFLSTYVLMVFGLGS). Topologically, residues 39 to 51 (VAHMVLGERLGSY) are extracellular. A helical membrane pass occupies residues 52–69 (LGVNLGFGFGVTMGIHVA). Over 70–73 (GGIS) the chain is Cytoplasmic. Residues 74-87 (GAHMNAAVTFTNCA) constitute an intramembrane region (discontinuously helical). The NPA 1 signature appears at 78-80 (NAA). Over 88–95 (LGRMAWKK) the chain is Cytoplasmic. A helical transmembrane segment spans residues 96–116 (FPIYVLGQFLGSFLAAATTYL). Residues 117-151 (IFYGAINHYAGGELLVTGPKSTANIFATYLPEHMT) lie on the Extracellular side of the membrane. Residues 152-172 (LWRGFVDEVFVTGMLQLCIFA) form a helical membrane-spanning segment. Residues 173-184 (ITDKLNSPALQG) are Cytoplasmic-facing. The chain crosses the membrane as a helical span at residues 185–201 (TEPLMIGILVCVLGVSL). The Extracellular segment spans residues 202–205 (GMNT). Residues 206–219 (GYAINPSRDLPPRF) constitute an intramembrane region (discontinuously helical). An NPA 2 motif is present at residues 210–212 (NPS). At 220 to 237 (FTFIAGWGKKVFSAGNNW) the chain is on the extracellular side. Residues 238–259 (WWVPVVAPLLGAYLGGIVYLGL) form a helical membrane-spanning segment. Residues 260–269 (IHAGIPPQGS) are Cytoplasmic-facing.

This sequence belongs to the MIP/aquaporin (TC 1.A.8) family. In terms of assembly, homotetramer; each monomer provides an independent glycerol/water pore. Two homotetramers on opposing membranes can dimerize, forming a cell-cell junction. Interacts with PLIN1. In terms of processing, phosphorylation by PKA could prevent the interaction with PLIN1. As to expression, detected in heart, kidney and testis.

Its subcellular location is the cell membrane. It localises to the cytoplasmic vesicle membrane. The protein localises to the lipid droplet. The enzyme catalyses glycerol(in) = glycerol(out). The catalysed reaction is H2O(in) = H2O(out). It catalyses the reaction urea(in) = urea(out). With respect to regulation, glycerol transport is regulated by pH, with the porin being permeable to glycerol at pH 7.4 but not at pH 5.5. Water permeability, however, is not influenced by pH. Not inhibited by mercury ions. Functionally, aquaglyceroporins form homotetrameric transmembrane channels, with each monomer independently mediating glycerol and water transport across the plasma membrane along their osmotic gradient. Could also be permeable to urea. Mediates the efflux of glycerol, formed upon triglyceride hydrolysis, to avoid its accumulation in adipocytes and to make it available to other tissues. In the kidney, mediates the reabsorption of glycerol, preventing its loss in urine, again participating to energy homeostasis. In pancreatic beta cells, it also mediates the efflux of glycerol, regulating its intracellular levels. The polypeptide is Aquaporin-7 (Rattus norvegicus (Rat)).